A 196-amino-acid chain; its full sequence is MRLPLLVSAGVLLVALLPCPPCRALLSRGPVPGARQAPQHPQPLDFFQPPPQSEQPQQPQARPVLLRMGEEYFLRLGNLNKSPAAPLSPASSLLAGGSGSRPSPEQATANFFRVLLQQLLLPRRSLDSPAALAERGARNALGGHQEAPERERRSEEPPISLDLTFHLLREVLEMARAEQLAQQAHSNRKLMEIIGK.

The signal sequence occupies residues 1–24; the sequence is MRLPLLVSAGVLLVALLPCPPCRA. The propeptide occupies 25–153; the sequence is LLSRGPVPGA…HQEAPERERR (129 aa). 3 disordered regions span residues 32-61, 85-105, and 136-158; these read PGARQAPQHPQPLDFFQPPPQSEQPQQPQA, APLSPASSLLAGGSGSRPSPE, and GARNALGGHQEAPERERRSEEPP. Composition is skewed to low complexity over residues 38 to 47 and 85 to 104; these read PQHPQPLDFF and APLSPASSLLAGGSGSRPSP. The span at 146-156 shows a compositional bias: basic and acidic residues; sequence EAPERERRSEE. An Isoleucine amide modification is found at Ile-194.

It belongs to the sauvagine/corticotropin-releasing factor/urotensin I family. As to quaternary structure, interacts (via C-terminus) with CRFR1 (via N-terminal extracellular domain). As to expression, produced by the hypothalamus and placenta.

It is found in the secreted. In terms of biological role, hormone regulating the release of corticotropin from pituitary gland. Induces NLRP6 in intestinal epithelial cells, hence may influence gut microbiota profile. This chain is Corticoliberin (CRH), found in Homo sapiens (Human).